Reading from the N-terminus, the 333-residue chain is D-fructose 1,6-bisphosphatase class 2/sedoheptulose 1,7-bisphosphatase (333 aa).

Mn(2+) is bound by residues aspartate 33, glutamate 57, aspartate 85, and glutamate 88. Substrate contacts are provided by residues 88-90 (EGT), tyrosine 119, 164-166 (RAR), and 186-188 (DGD). Residue glutamate 213 coordinates Mn(2+).

This sequence belongs to the FBPase class 2 family. In terms of assembly, homotetramer. The cofactor is Mn(2+).

The enzyme catalyses beta-D-fructose 1,6-bisphosphate + H2O = beta-D-fructose 6-phosphate + phosphate. It catalyses the reaction D-sedoheptulose 1,7-bisphosphate + H2O = D-sedoheptulose 7-phosphate + phosphate. Its pathway is carbohydrate biosynthesis; Calvin cycle. Catalyzes the hydrolysis of fructose 1,6-bisphosphate (Fru 1,6-P2) and sedoheptulose 1,7-bisphosphate (Sed 1,7-P2) to fructose 6-phosphate and sedoheptulose 7-phosphate, respectively. This chain is D-fructose 1,6-bisphosphatase class 2/sedoheptulose 1,7-bisphosphatase, found in Prochlorococcus marinus subsp. pastoris (strain CCMP1986 / NIES-2087 / MED4).